We begin with the raw amino-acid sequence, 550 residues long: Chaperonin GroEL (550 aa).

ATP contacts are provided by residues 30-33 (TLGP), lysine 51, 87-91 (DGTTT), glycine 415, 479-481 (NAA), and aspartate 495. The tract at residues 526-550 (KDEKSDLGNSSAPSAGGMGGMGGMM) is disordered. Over residues 541–550 (GGMGGMGGMM) the composition is skewed to gly residues.

It belongs to the chaperonin (HSP60) family. In terms of assembly, forms a cylinder of 14 subunits composed of two heptameric rings stacked back-to-back. Interacts with the co-chaperonin GroES.

The protein resides in the cytoplasm. The enzyme catalyses ATP + H2O + a folded polypeptide = ADP + phosphate + an unfolded polypeptide.. Together with its co-chaperonin GroES, plays an essential role in assisting protein folding. The GroEL-GroES system forms a nano-cage that allows encapsulation of the non-native substrate proteins and provides a physical environment optimized to promote and accelerate protein folding. The sequence is that of Chaperonin GroEL from Buchnera aphidicola subsp. Baizongia pistaciae (strain Bp).